We begin with the raw amino-acid sequence, 161 residues long: Nucleotide-binding protein Ssed_3443 (161 aa).

The protein belongs to the YajQ family.

Functionally, nucleotide-binding protein. The chain is Nucleotide-binding protein Ssed_3443 from Shewanella sediminis (strain HAW-EB3).